The following is a 284-amino-acid chain: 2-dehydro-3-deoxyphosphooctonate aldolase (284 aa).

The protein belongs to the KdsA family.

It is found in the cytoplasm. The catalysed reaction is D-arabinose 5-phosphate + phosphoenolpyruvate + H2O = 3-deoxy-alpha-D-manno-2-octulosonate-8-phosphate + phosphate. Its pathway is carbohydrate biosynthesis; 3-deoxy-D-manno-octulosonate biosynthesis; 3-deoxy-D-manno-octulosonate from D-ribulose 5-phosphate: step 2/3. The protein operates within bacterial outer membrane biogenesis; lipopolysaccharide biosynthesis. This Yersinia pseudotuberculosis serotype O:1b (strain IP 31758) protein is 2-dehydro-3-deoxyphosphooctonate aldolase.